Reading from the N-terminus, the 224-residue chain is uncharacterized protein (224 aa).

G177, I197, and L206 together coordinate S-adenosyl-L-methionine.

The protein belongs to the class IV-like SAM-binding methyltransferase superfamily. RNA methyltransferase TrmH family.

This is an uncharacterized protein from Archaeoglobus fulgidus (strain ATCC 49558 / DSM 4304 / JCM 9628 / NBRC 100126 / VC-16).